Here is a 112-residue protein sequence, read N- to C-terminus: Divalent-cation tolerance protein CutA (112 aa).

Residues cysteine 16, histidine 83, and histidine 84 each coordinate Cu cation.

Belongs to the CutA family. In terms of assembly, homotrimer. Cu cation is required as a cofactor.

The protein resides in the cytoplasm. In terms of biological role, involved in resistance toward heavy metals. This is Divalent-cation tolerance protein CutA from Shigella flexneri.